The sequence spans 424 residues: L-threonine:uridine-5'-aldehyde transaldolase (424 aa).

An N6-(pyridoxal phosphate)lysine modification is found at lysine 235.

The protein belongs to the SHMT family. Pyridoxal 5'-phosphate is required as a cofactor.

It carries out the reaction uridine-5'-aldehyde + L-threonine = (5'S,6'S)-C-glycyluridine + acetaldehyde. Its pathway is antibiotic biosynthesis. Transaldolase involved in the biosynthesis of the lipopeptidyl nucleoside antibiotic A-90289. Catalyzes the condensation of L-threonine and uridine-5'-aldehyde to form 5'-C-glycyluridine (GlyU). Forms (5'S,6'S)-GlyU. Has no activity with alternative amino acids, such as glycine or serine. This is L-threonine:uridine-5'-aldehyde transaldolase from Streptomyces sp.